Here is a 242-residue protein sequence, read N- to C-terminus: Ubiquinone biosynthesis O-methyltransferase (242 aa).

Arg44, Gly64, Asp85, and Met129 together coordinate S-adenosyl-L-methionine.

Belongs to the methyltransferase superfamily. UbiG/COQ3 family.

The enzyme catalyses a 3-demethylubiquinol + S-adenosyl-L-methionine = a ubiquinol + S-adenosyl-L-homocysteine + H(+). It carries out the reaction a 3-(all-trans-polyprenyl)benzene-1,2-diol + S-adenosyl-L-methionine = a 2-methoxy-6-(all-trans-polyprenyl)phenol + S-adenosyl-L-homocysteine + H(+). It participates in cofactor biosynthesis; ubiquinone biosynthesis. Its function is as follows. O-methyltransferase that catalyzes the 2 O-methylation steps in the ubiquinone biosynthetic pathway. In Klebsiella pneumoniae subsp. pneumoniae (strain ATCC 700721 / MGH 78578), this protein is Ubiquinone biosynthesis O-methyltransferase.